Reading from the N-terminus, the 1001-residue chain is Transcription-repair-coupling factor (1001 aa).

Residues 499-658 (DLSSHRVMDR…LSQIKGISSL (160 aa)) form the Helicase ATP-binding domain. 512–519 (GDVGFGKT) provides a ligand contact to ATP. Positions 611-614 (DEEH) match the DEEH box motif. In terms of domain architecture, Helicase C-terminal spans 679–835 (LLKEIIYREL…SIAYHDLEIR (157 aa)).

In the N-terminal section; belongs to the UvrB family. It in the C-terminal section; belongs to the helicase family. RecG subfamily.

The protein resides in the cytoplasm. Its function is as follows. Couples transcription and DNA repair by recognizing RNA polymerase (RNAP) stalled at DNA lesions. Mediates ATP-dependent release of RNAP and its truncated transcript from the DNA, and recruitment of nucleotide excision repair machinery to the damaged site. The protein is Transcription-repair-coupling factor of Helicobacter pylori (strain J99 / ATCC 700824) (Campylobacter pylori J99).